The sequence spans 69 residues: uncharacterized protein (69 aa).

This is an uncharacterized protein from Homo sapiens (Human).